Consider the following 547-residue polypeptide: Cilia- and flagella- associated protein 210 (547 aa).

Coiled-coil stretches lie at residues 50 to 131, 183 to 251, and 342 to 405; these read ERIR…RKKA, VKLN…MKKN, and IARD…KADK. A disordered region spans residues 214–237; sequence KQIEEHKEEEEARKKSEEKDAEEM.

As to quaternary structure, microtubule inner protein component of sperm flagellar doublet microtubules.

The protein resides in the cytoplasm. It is found in the cytoskeleton. Its subcellular location is the cilium axoneme. It localises to the flagellum axoneme. Functionally, microtubule inner protein (MIP) part of the dynein-decorated doublet microtubules (DMTs) in cilia axoneme, which is required for motile cilia beating. This Mus musculus (Mouse) protein is Cilia- and flagella- associated protein 210 (Cfap210).